The chain runs to 186 residues: MGDPKRPRKKYETPRHPWEAERLEYERKLMRKYGLRRKKELWRHQTQLKRWRERAKELMARTDPEAQREREALFRKLYDLGILDKKPEEATLDDILRLTVEDVLERRLQTIVYRKGLAKTPLQARQLVVHRHIAIGDRIVTVPSYLVSREEEEEVDYSPYSPLKDEDHPIRCEARGESPEETAAEE.

Residues 106–170 (RRLQTIVYRK…SPLKDEDHPI (65 aa)) form the S4 RNA-binding domain. A disordered region spans residues 151 to 186 (EEEEVDYSPYSPLKDEDHPIRCEARGESPEETAAEE). The span at 163–178 (LKDEDHPIRCEARGES) shows a compositional bias: basic and acidic residues.

This sequence belongs to the universal ribosomal protein uS4 family. In terms of assembly, part of the 30S ribosomal subunit. Contacts protein S5. The interaction surface between S4 and S5 is involved in control of translational fidelity.

Its function is as follows. One of the primary rRNA binding proteins, it binds directly to 16S rRNA where it nucleates assembly of the body of the 30S subunit. Functionally, with S5 and S12 plays an important role in translational accuracy. This is Small ribosomal subunit protein uS4 from Methanopyrus kandleri (strain AV19 / DSM 6324 / JCM 9639 / NBRC 100938).